The primary structure comprises 326 residues: N-acetyl-gamma-glutamyl-phosphate reductase (326 aa).

Residue Cys155 is part of the active site.

Belongs to the NAGSA dehydrogenase family. Type 1 subfamily.

The protein resides in the cytoplasm. The enzyme catalyses N-acetyl-L-glutamate 5-semialdehyde + phosphate + NADP(+) = N-acetyl-L-glutamyl 5-phosphate + NADPH + H(+). It functions in the pathway amino-acid biosynthesis; L-arginine biosynthesis; N(2)-acetyl-L-ornithine from L-glutamate: step 3/4. Its function is as follows. Catalyzes the NADPH-dependent reduction of N-acetyl-5-glutamyl phosphate to yield N-acetyl-L-glutamate 5-semialdehyde. The sequence is that of N-acetyl-gamma-glutamyl-phosphate reductase from Shewanella sediminis (strain HAW-EB3).